A 948-amino-acid polypeptide reads, in one-letter code: Valine--tRNA ligase (948 aa).

Residues 40–50 (PNVTGSLHMGH) carry the 'HIGH' region motif. The 'KMSKS' region motif lies at 551-555 (KMSKS). Lysine 554 is an ATP binding site. Residues 879 to 945 (LIDKGAELAR…GKLAEQHARI (67 aa)) are a coiled coil.

It belongs to the class-I aminoacyl-tRNA synthetase family. ValS type 1 subfamily. Monomer.

It localises to the cytoplasm. It carries out the reaction tRNA(Val) + L-valine + ATP = L-valyl-tRNA(Val) + AMP + diphosphate. Its function is as follows. Catalyzes the attachment of valine to tRNA(Val). As ValRS can inadvertently accommodate and process structurally similar amino acids such as threonine, to avoid such errors, it has a 'posttransfer' editing activity that hydrolyzes mischarged Thr-tRNA(Val) in a tRNA-dependent manner. The sequence is that of Valine--tRNA ligase from Pseudomonas syringae pv. syringae (strain B728a).